The primary structure comprises 99 residues: Aspartyl/glutamyl-tRNA(Asn/Gln) amidotransferase subunit C (99 aa).

It belongs to the GatC family. In terms of assembly, heterotrimer of A, B and C subunits.

It catalyses the reaction L-glutamyl-tRNA(Gln) + L-glutamine + ATP + H2O = L-glutaminyl-tRNA(Gln) + L-glutamate + ADP + phosphate + H(+). The enzyme catalyses L-aspartyl-tRNA(Asn) + L-glutamine + ATP + H2O = L-asparaginyl-tRNA(Asn) + L-glutamate + ADP + phosphate + 2 H(+). Its function is as follows. Allows the formation of correctly charged Asn-tRNA(Asn) or Gln-tRNA(Gln) through the transamidation of misacylated Asp-tRNA(Asn) or Glu-tRNA(Gln) in organisms which lack either or both of asparaginyl-tRNA or glutaminyl-tRNA synthetases. The reaction takes place in the presence of glutamine and ATP through an activated phospho-Asp-tRNA(Asn) or phospho-Glu-tRNA(Gln). The sequence is that of Aspartyl/glutamyl-tRNA(Asn/Gln) amidotransferase subunit C from Methylibium petroleiphilum (strain ATCC BAA-1232 / LMG 22953 / PM1).